The primary structure comprises 401 residues: Nuclear hormone receptor family member nhr-65 (401 aa).

Positions P10–F79 form a DNA-binding region, nuclear receptor. NR C4-type zinc fingers lie at residues C13 to C33 and C49 to C67. In terms of domain architecture, NR LBD spans K132–A398.

This sequence belongs to the nuclear hormone receptor family.

It is found in the nucleus. Its function is as follows. Orphan nuclear receptor. The polypeptide is Nuclear hormone receptor family member nhr-65 (nhr-65) (Caenorhabditis elegans).